The following is a 417-amino-acid chain: Adenylosuccinate synthetase (417 aa).

Residues 11–17 (GDEGKGK) and 39–41 (GHT) contribute to the GTP site. The active-site Proton acceptor is Asp-12. The Mg(2+) site is built by Asp-12 and Gly-39. IMP is bound by residues 12–15 (DEGK), 37–40 (NAGH), Thr-126, Arg-140, Gln-218, Thr-233, and Arg-295. Catalysis depends on His-40, which acts as the Proton donor. Substrate is bound at residue 291–297 (TVSGRIR). Residues Arg-297, 323–325 (KLD), and 406–408 (SNG) contribute to the GTP site.

Belongs to the adenylosuccinate synthetase family. Homodimer. It depends on Mg(2+) as a cofactor.

It localises to the cytoplasm. The catalysed reaction is IMP + L-aspartate + GTP = N(6)-(1,2-dicarboxyethyl)-AMP + GDP + phosphate + 2 H(+). It functions in the pathway purine metabolism; AMP biosynthesis via de novo pathway; AMP from IMP: step 1/2. Its function is as follows. Plays an important role in the de novo pathway of purine nucleotide biosynthesis. Catalyzes the first committed step in the biosynthesis of AMP from IMP. The chain is Adenylosuccinate synthetase from Neorickettsia sennetsu (strain ATCC VR-367 / Miyayama) (Ehrlichia sennetsu).